The sequence spans 282 residues: Formamidopyrimidine-DNA glycosylase (282 aa).

Residue Pro2 is the Schiff-base intermediate with DNA of the active site. The active-site Proton donor is Glu3. The Proton donor; for beta-elimination activity role is filled by Lys58. Residues His96, Arg115, and Lys152 each coordinate DNA. The segment at 238 to 272 (HVYGRGGQPCERCGEEILKTVLGGRGTHYCPSCQN) adopts an FPG-type zinc-finger fold. Residue Arg262 is the Proton donor; for delta-elimination activity of the active site.

This sequence belongs to the FPG family. Monomer. Zn(2+) is required as a cofactor.

The catalysed reaction is Hydrolysis of DNA containing ring-opened 7-methylguanine residues, releasing 2,6-diamino-4-hydroxy-5-(N-methyl)formamidopyrimidine.. It catalyses the reaction 2'-deoxyribonucleotide-(2'-deoxyribose 5'-phosphate)-2'-deoxyribonucleotide-DNA = a 3'-end 2'-deoxyribonucleotide-(2,3-dehydro-2,3-deoxyribose 5'-phosphate)-DNA + a 5'-end 5'-phospho-2'-deoxyribonucleoside-DNA + H(+). Functionally, involved in base excision repair of DNA damaged by oxidation or by mutagenic agents. Acts as a DNA glycosylase that recognizes and removes damaged bases. Has a preference for oxidized purines, such as 7,8-dihydro-8-oxoguanine (8-oxoG). Has AP (apurinic/apyrimidinic) lyase activity and introduces nicks in the DNA strand. Cleaves the DNA backbone by beta-delta elimination to generate a single-strand break at the site of the removed base with both 3'- and 5'-phosphates. In Corynebacterium aurimucosum (strain ATCC 700975 / DSM 44827 / CIP 107346 / CN-1) (Corynebacterium nigricans), this protein is Formamidopyrimidine-DNA glycosylase.